The primary structure comprises 338 residues: MREQLEQMRQQALSAIAAATTEEMLNEVRVRYLGRKGELTGLMKGLGSLPADERPKVGQLVNTVKDEVEALIEQTMNRAREEATAKRLATERIDISLPGRGRRQGSKHPVTLVIEEVSEIFAGLGFSVAEGPEIEHDWYNFEALNFPPEHPARDMQDTFFVENELLLRTHTSPVQIRTMLKQKPPVRIIAPGTVYRCDSDATHSPMFHQIEGLMVDSQVSFADLKGILTTFTNQLFGQKTGVRLRPSFFPFTEPSAEVDIACVICGGSGCRVCKQTGWLEILGAGMVDPEVFRHVGYDPETISGFAFGMGIERIAMLKYGISDMRLLFENDVRFLKQF.

Residue glutamate 253 coordinates Mg(2+).

It belongs to the class-II aminoacyl-tRNA synthetase family. Phe-tRNA synthetase alpha subunit type 1 subfamily. As to quaternary structure, tetramer of two alpha and two beta subunits. Requires Mg(2+) as cofactor.

Its subcellular location is the cytoplasm. It catalyses the reaction tRNA(Phe) + L-phenylalanine + ATP = L-phenylalanyl-tRNA(Phe) + AMP + diphosphate + H(+). This chain is Phenylalanine--tRNA ligase alpha subunit, found in Trichlorobacter lovleyi (strain ATCC BAA-1151 / DSM 17278 / SZ) (Geobacter lovleyi).